The following is a 106-amino-acid chain: uncharacterized protein (106 aa).

This is an uncharacterized protein from Pseudanabaena tenuis (strain PCC 7409).